Reading from the N-terminus, the 262-residue chain is Type III pantothenate kinase (262 aa).

D9–K16 is a binding site for ATP. Substrate is bound by residues Y93 and G100–R103. D102 (proton acceptor) is an active-site residue. D122 is a K(+) binding site. T125 is a binding site for ATP. Position 175 (T175) interacts with substrate.

The protein belongs to the type III pantothenate kinase family. As to quaternary structure, homodimer. NH4(+) is required as a cofactor. The cofactor is K(+).

Its subcellular location is the cytoplasm. It catalyses the reaction (R)-pantothenate + ATP = (R)-4'-phosphopantothenate + ADP + H(+). Its pathway is cofactor biosynthesis; coenzyme A biosynthesis; CoA from (R)-pantothenate: step 1/5. Functionally, catalyzes the phosphorylation of pantothenate (Pan), the first step in CoA biosynthesis. The chain is Type III pantothenate kinase from Nitrosospira multiformis (strain ATCC 25196 / NCIMB 11849 / C 71).